A 244-amino-acid chain; its full sequence is 15,16-dihydrobiliverdin:ferredoxin oxidoreductase (244 aa).

Belongs to the HY2 family.

It catalyses the reaction 15,16-dihydrobiliverdin + oxidized 2[4Fe-4S]-[ferredoxin] = biliverdin IXalpha + reduced 2[4Fe-4S]-[ferredoxin] + 2 H(+). Functionally, catalyzes the two-electron reduction of biliverdin IX-alpha at the C15 methine bridge. The polypeptide is 15,16-dihydrobiliverdin:ferredoxin oxidoreductase (pebA) (Nostoc punctiforme (strain ATCC 29133 / PCC 73102)).